The following is a 506-amino-acid chain: Trans-cinnamate 4-monooxygenase (506 aa).

The chain crosses the membrane as a helical span at residues 3-23 (LLLLEKTLIGLFLAAVVAIAV). Residues 213 to 218 (RSRLAQ) and A307 each bind (E)-cinnamate. Residue C448 participates in heme binding.

It belongs to the cytochrome P450 family. Heme is required as a cofactor.

Its subcellular location is the membrane. It carries out the reaction (E)-cinnamate + reduced [NADPH--hemoprotein reductase] + O2 = (E)-4-coumarate + oxidized [NADPH--hemoprotein reductase] + H2O + H(+). The protein operates within phenylpropanoid metabolism; trans-4-coumarate biosynthesis; trans-4-coumarate from trans-cinnamate: step 1/1. In terms of biological role, catalyzes the first oxidative step of the phenylpropanoid pathway in higher plants by transforming trans-cinnamate into p-coumarate. The compounds formed by this pathway are essential components for lignification, pollination, and defense against ultraviolet light, predators and pathogens. This chain is Trans-cinnamate 4-monooxygenase (CYP73A11), found in Glycine max (Soybean).